Here is a 156-residue protein sequence, read N- to C-terminus: V-type sodium ATPase subunit K (156 aa).

4 consecutive transmembrane segments (helical) span residues G11 to A31, L60 to L80, G89 to A109, and I132 to L152.

It belongs to the V-ATPase proteolipid subunit family. In terms of processing, the N-terminus is blocked.

Its subcellular location is the cell membrane. Its function is as follows. Involved in ATP-driven sodium extrusion. The chain is V-type sodium ATPase subunit K (ntpK) from Enterococcus hirae (strain ATCC 9790 / DSM 20160 / JCM 8729 / LMG 6399 / NBRC 3181 / NCIMB 6459 / NCDO 1258 / NCTC 12367 / WDCM 00089 / R).